The chain runs to 304 residues: Caspase-6 (304 aa).

Residues 1 to 29 form a disordered region; it reads MSGAERRPAAGRVQLDSKPTPTTTADGNQ. Residues 1 to 35 constitute a propeptide that is removed on maturation; that stretch reads MSGAERRPAAGRVQLDSKPTPTTTADGNQNITEVD. Residues 17–29 show a composition bias toward polar residues; it reads SKPTPTTTADGNQ. The segment at 54–56 is tri-arginine exosite; the sequence is QRR. His133 is a catalytic residue. Positions 137–154 are 130's region; that stretch reads DHVYAYDAQIKIETITNM. Cys175 is an active-site residue. A propeptide spanning residues 192 to 204 is cleaved from the precursor; that stretch reads SKDETTVNQTEVD.

This sequence belongs to the peptidase C14A family. As to quaternary structure, heterotetramer that consists of two anti-parallel arranged heterodimers, each one formed by a 18 kDa (p18) and a 11 kDa (p11) subunit. In terms of assembly, heterotetramer that consists of two anti-parallel arranged heterodimers, each one formed by a 18 kDa (Caspase-6 subunit p18) and a 11 kDa (Caspase-6 subunit p11) subunit. Widely expressed.

It localises to the cytoplasm. The protein localises to the nucleus. It carries out the reaction Strict requirement for Asp at position P1 and has a preferred cleavage sequence of Val-Glu-His-Asp-|-.. Its activity is regulated as follows. During activation, the N-terminal prodomain is removed by cleavage. Concomitantly, double cleavage gives rise to a large 18-kDa and a small 11-kDa subunit. The two large and two small subunits then assemble to form the active CASP6 complex. Intramolecular cleavage at Asp-191 is a prerequisite for CASP6 self-activation. Its function is as follows. Cysteine protease that plays essential roles in programmed cell death, development and innate immunity. Acts as a non-canonical executioner caspase during apoptosis: localizes in the nucleus and cleaves the nuclear structural protein lamin-A/LMNA thereby inducing nuclear shrinkage and fragmentation. Lamin-A/LMNA cleavage is required for chromatin condensation and nuclear disassembly during apoptotic execution. Plays an essential role in defense against viruses by acting as a central mediator of the ZBP1-mediated pyroptosis, apoptosis, and necroptosis (PANoptosis), independently of its cysteine protease activity. PANoptosis is a unique inflammatory programmed cell death, which provides a molecular scaffold that allows the interactions and activation of machinery required for inflammasome/pyroptosis, apoptosis and necroptosis. The protein is Caspase-6 of Gallus gallus (Chicken).